The primary structure comprises 411 residues: Translation initiation factor 2 subunit gamma (411 aa).

The 193-residue stretch at 9-201 folds into the tr-type G domain; sequence QPSVNIGMVG…AIEKYIPSPK (193 aa). The G1 stretch occupies residues 18–25; that stretch reads GHVDHGKS. Residues Asp-21, Ser-25, Gly-46, and Ser-48 each contribute to the Mg(2+) site. 21–26 lines the GTP pocket; the sequence is DHGKST. The interval 46-50 is G2; that stretch reads GISIK. Positions 88-91 are G3; it reads DAPG. GTP contacts are provided by residues 144–147 and 179–181; these read NKID and SAY. Residues 144–147 are G4; that stretch reads NKID. A G5 region spans residues 179–181; sequence SAY.

This sequence belongs to the TRAFAC class translation factor GTPase superfamily. Classic translation factor GTPase family. EIF2G subfamily. Heterotrimer composed of an alpha, a beta and a gamma chain. It depends on Mg(2+) as a cofactor.

It catalyses the reaction GTP + H2O = GDP + phosphate + H(+). Its function is as follows. eIF-2 functions in the early steps of protein synthesis by forming a ternary complex with GTP and initiator tRNA. This chain is Translation initiation factor 2 subunit gamma, found in Thermoplasma acidophilum (strain ATCC 25905 / DSM 1728 / JCM 9062 / NBRC 15155 / AMRC-C165).